A 699-amino-acid polypeptide reads, in one-letter code: Polyribonucleotide nucleotidyltransferase (699 aa).

Mg(2+) is bound by residues D487 and D493. Residues 554 to 613 (PRMLNMKINPEKIRDVIGKGGAVIRALQEETGTVIEIEDDGSITISSVSAEGAQKAKARI) form the KH domain. The 69-residue stretch at 623-691 (GKVYEGTVVR…ERGKIRLSMK (69 aa)) folds into the S1 motif domain.

This sequence belongs to the polyribonucleotide nucleotidyltransferase family. The cofactor is Mg(2+).

The protein resides in the cytoplasm. It carries out the reaction RNA(n+1) + phosphate = RNA(n) + a ribonucleoside 5'-diphosphate. Functionally, involved in mRNA degradation. Catalyzes the phosphorolysis of single-stranded polyribonucleotides processively in the 3'- to 5'-direction. The chain is Polyribonucleotide nucleotidyltransferase from Azoarcus sp. (strain BH72).